Consider the following 342-residue polypeptide: DNA-directed RNA polymerase subunit alpha (342 aa).

Residues 1–239 (MTTFLAKNWS…DQLQVFINFQ (239 aa)) form an alpha N-terminal domain (alpha-NTD) region. Residues 254 to 342 (INPVLLKKVY…SLAKKHEDQY (89 aa)) are alpha C-terminal domain (alpha-CTD).

Belongs to the RNA polymerase alpha chain family. Homodimer. The RNAP catalytic core consists of 2 alpha, 1 beta, 1 beta' and 1 omega subunit. When a sigma factor is associated with the core the holoenzyme is formed, which can initiate transcription.

It catalyses the reaction RNA(n) + a ribonucleoside 5'-triphosphate = RNA(n+1) + diphosphate. DNA-dependent RNA polymerase catalyzes the transcription of DNA into RNA using the four ribonucleoside triphosphates as substrates. This is DNA-directed RNA polymerase subunit alpha from Orientia tsutsugamushi (strain Ikeda) (Rickettsia tsutsugamushi).